The chain runs to 400 residues: Enoyl-[acyl-carrier-protein] reductase [NADH] (400 aa).

NAD(+) contacts are provided by residues 48 to 53 (GASTGY), 74 to 75 (FE), 111 to 112 (DA), and 139 to 140 (LA). Residue Tyr-225 participates in substrate binding. Tyr-235 serves as the catalytic Proton donor. NAD(+) is bound by residues Lys-244 and 273-275 (VVT).

It belongs to the TER reductase family. Monomer.

It catalyses the reaction a 2,3-saturated acyl-[ACP] + NAD(+) = a (2E)-enoyl-[ACP] + NADH + H(+). It functions in the pathway lipid metabolism; fatty acid biosynthesis. In terms of biological role, involved in the final reduction of the elongation cycle of fatty acid synthesis (FAS II). Catalyzes the reduction of a carbon-carbon double bond in an enoyl moiety that is covalently linked to an acyl carrier protein (ACP). The sequence is that of Enoyl-[acyl-carrier-protein] reductase [NADH] from Burkholderia multivorans (strain ATCC 17616 / 249).